Here is a 1040-residue protein sequence, read N- to C-terminus: Alpha-mannosidase 2C1 (1040 aa).

4 residues coordinate Co(2+): His-260, Asp-262, Asp-372, and His-577. Asp-372 serves as the catalytic Nucleophile.

It belongs to the glycosyl hydrolase 38 family. Co(2+) is required as a cofactor.

Its subcellular location is the cytoplasm. It carries out the reaction Hydrolysis of terminal, non-reducing alpha-D-mannose residues in alpha-D-mannosides.. Strongly inhibited by swainsonine. Also inhibited to a lesser extent by deoxymannojirimycin (DMM). In terms of biological role, cleaves alpha 1,2-, alpha 1,3-, and alpha 1,6-linked mannose residues on cytoplasmic free oligosaccharides generated by N-glycoprotein degradation pathways. The protein is Alpha-mannosidase 2C1 (MAN2C1) of Homo sapiens (Human).